Reading from the N-terminus, the 116-residue chain is Large ribosomal subunit protein uL24 (116 aa).

It belongs to the universal ribosomal protein uL24 family. Part of the 50S ribosomal subunit.

In terms of biological role, one of two assembly initiator proteins, it binds directly to the 5'-end of the 23S rRNA, where it nucleates assembly of the 50S subunit. Located at the polypeptide exit tunnel on the outside of the subunit. This Methanothrix thermoacetophila (strain DSM 6194 / JCM 14653 / NBRC 101360 / PT) (Methanosaeta thermophila) protein is Large ribosomal subunit protein uL24.